A 412-amino-acid polypeptide reads, in one-letter code: Small ribosomal subunit protein mL103 (rPPR7) (412 aa).

Residues 1 to 14 (MASSRISLRLVRRF) constitute a mitochondrion transit peptide. A compositionally biased stretch (polar residues) spans 21 to 37 (GTTTAPSSGKISVSKAK). The segment at 21–43 (GTTTAPSSGKISVSKAKSTLRKE) is disordered. PPR repeat units follow at residues 101–135 (EEPF…GTPR), 136–166 (SAVS…IPQR), 173–207 (DKIS…GMEV), 208–242 (TTIA…GCEL), 243–276 (DNAA…GLKP), 277–311 (DTIS…NCAP), 312–346 (NAAT…HKIP), and 347–377 (DFNT…VKKK).

The protein belongs to the PPR family. P subfamily. As to quaternary structure, component of the mitochondrial ribosome small subunit.

Its subcellular location is the mitochondrion. In Arabidopsis thaliana (Mouse-ear cress), this protein is Small ribosomal subunit protein mL103 (rPPR7).